Consider the following 580-residue polypeptide: Putative Xaa-Pro dipeptidyl-peptidase (580 aa).

Residues Ser207, Asp319, and His350 each act as charge relay system in the active site.

This sequence belongs to the peptidase S15 family.

The catalysed reaction is Hydrolyzes Xaa-Pro-|- bonds to release unblocked, N-terminal dipeptides from substrates including Ala-Pro-|-p-nitroanilide and (sequentially) Tyr-Pro-|-Phe-Pro-|-Gly-Pro-|-Ile.. This chain is Putative Xaa-Pro dipeptidyl-peptidase, found in Bacillus cereus (strain ATCC 14579 / DSM 31 / CCUG 7414 / JCM 2152 / NBRC 15305 / NCIMB 9373 / NCTC 2599 / NRRL B-3711).